Consider the following 313-residue polypeptide: Syndecan-1 (313 aa).

Positions 1 to 22 (MRRAALWLWLCALALRLQPALP) are cleaved as a signal peptide. Over 23–257 (QIVTANVPPE…GLLDRKEVLG (235 aa)) the chain is Extracellular. 2 disordered regions span residues 27 to 58 (ANVP…MTLS) and 95 to 186 (AGEK…VEDG). A compositionally biased stretch (acidic residues) spans 32-42 (EDQDGSGDDSD). A glycan (O-linked (Xyl...) (chondroitin sulfate) serine) is linked at serine 37. Residue asparagine 43 is glycosylated (N-linked (GlcNAc...) asparagine). O-linked (Xyl...) (heparan sulfate) serine glycosylation is found at serine 45 and serine 47. Over residues 97–129 (EKPEEGEPVAHVEAEPDFTARDKEKEATTRPRE) the composition is skewed to basic and acidic residues. Residues 135–154 (VTQQASTAARATTAQASVTS) show a composition bias toward low complexity. Residues serine 209 and serine 219 are each glycosylated (O-linked (Xyl...) (chondroitin sulfate) serine). A helical transmembrane segment spans residues 258 to 278 (GVIAGGLVGLIFAVCLVAFML). Over 279 to 313 (YRMKKKDEGSYSLEEPKQANGGAYQKPTKQEEFYA) the chain is Cytoplasmic. Positions 286–295 (EGSYSLEEPK) are enriched in basic and acidic residues. The disordered stretch occupies residues 286–313 (EGSYSLEEPKQANGGAYQKPTKQEEFYA). A Phosphoserine modification is found at serine 288.

The protein belongs to the syndecan proteoglycan family. Interacts with CDCP1. Interacts (via C-terminus) with TIAM1 (via PDZ domain). Interacts with MDK. Post-translationally, shedding is enhanced by a number of factors such as heparanase, thrombin or EGF. Also by stress and wound healing. PMA-mediated shedding is inhibited by TIMP3.

The protein localises to the membrane. It localises to the secreted. It is found in the extracellular exosome. Functionally, cell surface proteoglycan that contains both heparan sulfate and chondroitin sulfate and that links the cytoskeleton to the interstitial matrix. Regulates exosome biogenesis in concert with SDCBP and PDCD6IP. Able to induce its own expression in dental mesenchymal cells and also in the neighboring dental epithelial cells via an MSX1-mediated pathway. In Rattus norvegicus (Rat), this protein is Syndecan-1.